A 215-amino-acid polypeptide reads, in one-letter code: Pyrrolidone-carboxylate peptidase (215 aa).

Residues Glu-80, Cys-143, and His-167 contribute to the active site.

This sequence belongs to the peptidase C15 family. As to quaternary structure, homotetramer.

It is found in the cytoplasm. It carries out the reaction Release of an N-terminal pyroglutamyl group from a polypeptide, the second amino acid generally not being Pro.. Functionally, removes 5-oxoproline from various penultimate amino acid residues except L-proline. This chain is Pyrrolidone-carboxylate peptidase, found in Yersinia pseudotuberculosis serotype O:1b (strain IP 31758).